The primary structure comprises 286 residues: Bifunctional protein FolD (286 aa).

NADP(+) is bound at residue 166-168; it reads GAS.

The protein belongs to the tetrahydrofolate dehydrogenase/cyclohydrolase family. In terms of assembly, homodimer.

The enzyme catalyses (6R)-5,10-methylene-5,6,7,8-tetrahydrofolate + NADP(+) = (6R)-5,10-methenyltetrahydrofolate + NADPH. The catalysed reaction is (6R)-5,10-methenyltetrahydrofolate + H2O = (6R)-10-formyltetrahydrofolate + H(+). It functions in the pathway one-carbon metabolism; tetrahydrofolate interconversion. Functionally, catalyzes the oxidation of 5,10-methylenetetrahydrofolate to 5,10-methenyltetrahydrofolate and then the hydrolysis of 5,10-methenyltetrahydrofolate to 10-formyltetrahydrofolate. The protein is Bifunctional protein FolD of Idiomarina loihiensis (strain ATCC BAA-735 / DSM 15497 / L2-TR).